A 210-amino-acid chain; its full sequence is 23.6 kDa heat shock protein, mitochondrial (210 aa).

The N-terminal 31 residues, 1–31, are a transit peptide targeting the mitochondrion; it reads MASALALKRLLSSSIAPRSRSVLRPAVSSRL. The sHSP domain occupies 100–210; it reads MGASGARRGW…RNDVRQIEIN (111 aa). Positions 145–165 are disordered; that stretch reads GEGKNEEDGGEEGESGNRRFT.

Belongs to the small heat shock protein (HSP20) family. In terms of assembly, may form oligomeric structures.

The protein resides in the mitochondrion. The chain is 23.6 kDa heat shock protein, mitochondrial (HSP23.6) from Arabidopsis thaliana (Mouse-ear cress).